The following is a 409-amino-acid chain: Astacin-like metalloendopeptidase (409 aa).

The first 19 residues, 1–19 (MDLKMLLIFTAFLLPAVLG), serve as a signal peptide directing secretion. Residues 20 to 86 (FPIQDNYENS…EGDIVPRRSR (67 aa)) constitute a propeptide that is removed on maturation. Residues 30–42 (TATSESTQVTTEE) show a composition bias toward low complexity. A disordered region spans residues 30-55 (TATSESTQVTTEESIYDSPSPTETDS). The region spanning 87 to 285 (SAFNCRNCYW…AKINKLYNCS (199 aa)) is the Peptidase M12A domain. 5 disulfide bridges follow: cysteine 91–cysteine 94, cysteine 134–cysteine 284, cysteine 155–cysteine 175, cysteine 287–cysteine 313, and cysteine 339–cysteine 362. Zn(2+) is bound at residue histidine 183. Residue glutamate 184 is part of the active site. Zn(2+) is bound by residues histidine 187 and histidine 193. Residues 287–399 (CSTIIDAAFG…SGFQATFTSA (113 aa)) form the CUB domain.

Zn(2+) is required as a cofactor.

Its subcellular location is the cytoplasm. The protein localises to the cell membrane. It is found in the cytoplasmic vesicle. The protein resides in the secretory vesicle. It localises to the cortical granule. Its function is as follows. Probable oocyte-specific oolemmal receptor involved in sperm and egg adhesion and fertilization. Protease which may play a role in the breaking down of the vitelline membrane (days 0-5) and possibly, in the digestion of the egg white (days 9-12). In Coturnix japonica (Japanese quail), this protein is Astacin-like metalloendopeptidase.